A 348-amino-acid chain; its full sequence is Dihydroorotase (348 aa).

The Zn(2+) site is built by His-17 and His-19. Substrate-binding positions include 19 to 21 and Asn-45; that span reads HLR. Zn(2+) is bound by residues Lys-103, His-140, and His-178. Lys-103 carries the N6-carboxylysine modification. A substrate-binding site is contributed by His-140. Leu-223 provides a ligand contact to substrate. Residue Asp-251 participates in Zn(2+) binding. Asp-251 is a catalytic residue. Residues His-255 and Ala-267 each coordinate substrate.

Belongs to the metallo-dependent hydrolases superfamily. DHOase family. Class II DHOase subfamily. As to quaternary structure, homodimer. The cofactor is Zn(2+).

It carries out the reaction (S)-dihydroorotate + H2O = N-carbamoyl-L-aspartate + H(+). It participates in pyrimidine metabolism; UMP biosynthesis via de novo pathway; (S)-dihydroorotate from bicarbonate: step 3/3. Catalyzes the reversible cyclization of carbamoyl aspartate to dihydroorotate. The protein is Dihydroorotase of Escherichia coli O139:H28 (strain E24377A / ETEC).